The primary structure comprises 345 residues: MTYTASVVGGSGFTGGELLRLLDGHPEFELAQATSRSKENKTIGHSHPNLRHSDLRFSSPEDLESVDVLFAATPHGVSMEQIDAFQEAAGTVVDLSADFRLESEAQYDEWYDGHTRPKLLEQSEYALPELNRDNLEGADLIASGGCNATATILGLLPLFEADILSGDEQIVVDVKVGSSEGGAGGGEASSHPERSGVVRPYAPTGHRHEAEIQQFLGIDVSFTVHAVDMIRGASATCHVFPEQRVSKGDLWGAYRGEYEDEPFVELVAGGGGVYRYPEPKSVAGTNRAEVGFELDPGNKRLVVFSAIDNMMKGSAGQAVHAANVALGIEETAGLEFQGLHPVGAP.

Residue 11–14 (SGFT) coordinates NADP(+). Residues 34–56 (TSRSKENKTIGHSHPNLRHSDLR) form a disordered region. The active site involves Cys146. Asn309 is an NADP(+) binding site.

It belongs to the NAGSA dehydrogenase family. Type 1 subfamily. LysY sub-subfamily.

It localises to the cytoplasm. It catalyses the reaction [amino-group carrier protein]-C-terminal-N-(1-carboxy-5-oxopentan-1-yl)-L-glutamine + phosphate + NADP(+) = [amino-group carrier protein]-C-terminal-N-(1-carboxy-5-phosphooxy-5-oxopentan-1-yl)-L-glutamine + NADPH + H(+). It carries out the reaction [amino-group carrier protein]-C-terminal-gamma-(L-glutamyl-5-semialdehyde)-L-glutamate + phosphate + NADP(+) = [amino-group carrier protein]-C-terminal-gamma-(5-phospho-L-glutamyl)-L-glutamate + NADPH + H(+). The protein operates within amino-acid biosynthesis; L-lysine biosynthesis via AAA pathway; L-lysine from L-alpha-aminoadipate (Thermus route): step 3/5. It participates in amino-acid biosynthesis; L-arginine biosynthesis. In terms of biological role, involved in both the arginine and lysine biosynthetic pathways. This is Putative [LysW]-L-2-aminoadipate/[LysW]-L-glutamate phosphate reductase from Haloarcula marismortui (strain ATCC 43049 / DSM 3752 / JCM 8966 / VKM B-1809) (Halobacterium marismortui).